The sequence spans 818 residues: H(+)/Cl(-) exchange transporter 3 (818 aa).

The Cytoplasmic segment spans residues 1-125; that stretch reads MESEQLFHRG…WEMTKSLYDA (125 aa). 3 consecutive short sequence motifs (di-leucine internalization motif; mediates targeting to late endosome and lysosome membranes) follow at residues 28-29, 46-47, and 71-75; these read LL and LLDLL. A helical membrane pass occupies residues 126–163; it reads WSGWLVVTLTGLASGALAGLIDIAADWMTDLKEGICLS. N-linked (GlcNAc...) asparagine glycosylation is present at Asn-177. The chain crosses the membrane as a helical span at residues 209 to 232; sequence MNYIMYIFWALSFAFLAVSLVKVF. Residues 238–242 carry the Selectivity filter part_1 motif; the sequence is GSGIP. Residue Ser-239 participates in chloride binding. An intramembrane region (helical) is located at residues 241-248; sequence IPEIKTIL. 2 helical membrane passes run 258 to 276 and 282 to 301; these read GKWTLMIKTITLVLAVASG and EGPLVHVACCCGNIFSYLFP. Residues 280–284 carry the Selectivity filter part_2 motif; sequence GKEGP. 2 intramembrane regions (helical) span residues 313-325 and 329-337; these read VLSAASAAGVSVA and PIGGVLFSL. Helical transmembrane passes span 349 to 367, 391 to 416, and 423 to 443; these read LWRSFFAALVAAFVLRSIN, FPFILLGVFGGLWGAFFIRANIAWCR, and FGKYPVLEVIIVAAITAVIAF. 2 N-linked (GlcNAc...) asparagine glycosylation sites follow: Asn-451 and Asn-479. 2 helical membrane-spanning segments follow: residues 500–520 and 525–544; these read IWQLCLALIFKIIMTVFTFGI and GLFIPSMAIGAIAGRIVGIA. A Selectivity filter part_3 motif is present at residues 525-529; it reads GLFIP. Phe-527 is a binding site for chloride. Intramembrane regions (helical) lie at residues 572-586 and 590-601; these read GLYAMVGAAACLGGV and TVSLVVIVFELT. The note=Loop between two helices intramembrane region spans 602-605; it reads GGLE. The chain crosses the membrane as a helical span at residues 606–624; the sequence is YIVPLMAAVMTSKWVGDAF. Residues 625-818 lie on the Cytoplasmic side of the membrane; that stretch reads GREGIYEAHI…NQDPASIMFN (194 aa). Tyr-630 provides a ligand contact to chloride. 2 CBS domains span residues 658-722 and 755-812; these read MRPR…ARKK and LDMS…NQDP. ATP contacts are provided by residues 689-691 and 796-799; these read YNG and TKKD.

This sequence belongs to the chloride channel (TC 2.A.49) family. ClC-3/CLCN3 subfamily. In terms of assembly, monomer and homodimer. Forms heterodimers with CLCN4. In terms of processing, N-glycosylated. In terms of tissue distribution, abundant in brain, especially in the olfactory bulb, hippocampus, and cerebellum. A moderate expression is seen in the lung, kidney and adrenal gland.

It is found in the lysosome membrane. Its subcellular location is the late endosome membrane. It localises to the cell membrane. The protein localises to the early endosome membrane. In terms of biological role, strongly outwardly rectifying, electrogenic H(+)/Cl(-)exchanger which mediates the exchange of chloride ions against protons. The CLC channel family contains both chloride channels and proton-coupled anion transporters that exchange chloride or another anion for protons. The presence of conserved gating glutamate residues is typical for family members that function as antiporters. Strongly outwardly rectifying, electrogenic H(+)/Cl(-)exchanger which mediates the exchange of chloride ions against protons. May play an important role in neuronal cell function through regulation of membrane excitability by protein kinase C. It could help neuronal cells to establish short-term memory. The polypeptide is H(+)/Cl(-) exchange transporter 3 (Clcn3) (Rattus norvegicus (Rat)).